Reading from the N-terminus, the 221-residue chain is Putative N-acetylmannosamine-6-phosphate 2-epimerase (221 aa).

It belongs to the NanE family.

It catalyses the reaction an N-acyl-D-glucosamine 6-phosphate = an N-acyl-D-mannosamine 6-phosphate. It participates in amino-sugar metabolism; N-acetylneuraminate degradation; D-fructose 6-phosphate from N-acetylneuraminate: step 3/5. In terms of biological role, converts N-acetylmannosamine-6-phosphate (ManNAc-6-P) to N-acetylglucosamine-6-phosphate (GlcNAc-6-P). The polypeptide is Putative N-acetylmannosamine-6-phosphate 2-epimerase (Clostridium perfringens (strain SM101 / Type A)).